Reading from the N-terminus, the 272-residue chain is Putative B3 domain-containing protein Os02g0455900 (272 aa).

The TF-B3 DNA-binding region spans 30 to 134; sequence GKVLMPSDVS…RFFICCRCTC (105 aa). The interval 189-227 is disordered; it reads TASLGCAAAQPPQVPPTPTPRRRRRSMMVHPEPPEHTTD.

Its subcellular location is the nucleus. The polypeptide is Putative B3 domain-containing protein Os02g0455900 (Oryza sativa subsp. japonica (Rice)).